Here is a 334-residue protein sequence, read N- to C-terminus: 6-phosphogluconolactonase (334 aa).

The protein belongs to the cycloisomerase 2 family.

The enzyme catalyses 6-phospho-D-glucono-1,5-lactone + H2O = 6-phospho-D-gluconate + H(+). It functions in the pathway carbohydrate degradation; pentose phosphate pathway; D-ribulose 5-phosphate from D-glucose 6-phosphate (oxidative stage): step 2/3. In terms of biological role, catalyzes the hydrolysis of 6-phosphogluconolactone to 6-phosphogluconate. The polypeptide is 6-phosphogluconolactonase (Buchnera aphidicola subsp. Acyrthosiphon pisum (strain Tuc7)).